A 464-amino-acid chain; its full sequence is GPI mannosyltransferase 2 (464 aa).

The Cytoplasmic portion of the chain corresponds to 1 to 70 (MYYIGHPSYY…MTRSGYNYFK (70 aa)). A helical membrane pass occupies residues 71-91 (GICVCTFLLSTILYLGIAVIM). Residues 92-166 (SHLCVFDDTA…ISFLAFRSKD (75 aa)) lie on the Lumenal side of the membrane. N-linked (GlcNAc...) asparagine glycosylation is found at N108 and N139. Residues 167–187 (VVLLGIVSCFASIFFHAIACY) form a helical membrane-spanning segment. The Cytoplasmic segment spans residues 188–219 (ALYLLTKSIFSNQKMTAYTVIFYCFSPSGIYM). A helical transmembrane segment spans residues 220 to 240 (SVGYTESLFAAFSFLGLLLFI). Residues 241 to 260 (KKQQYPAAFLWSLATLIRSN) are Lumenal-facing. A helical transmembrane segment spans residues 261–281 (GIFWCIFFGMPAIGTLKISLE). The Cytoplasmic portion of the chain corresponds to 282–289 (RLQLTFMQ). A helical membrane pass occupies residues 290–309 (VSQLVGYGTKCLIILVPFFY). At 310 to 356 (NQYLGFKLFCPGVAWCNKSLPLIYPAVQEKYWNVGFLRYWTLNNIPN) the chain is on the lumenal side. An N-linked (GlcNAc...) asparagine glycan is attached at N326. Residues 357 to 377 (FLFALLSIIPILFALFYSISG) traverse the membrane as a helical segment. Topologically, residues 378 to 388 (STLHSFRSIKS) are cytoplasmic. A helical transmembrane segment spans residues 389–409 (HLVLSALYLYIGCFHMHTQVL). Over 410-440 (NRMSSALPLLYWSMAHATLYAKSRNLKAFGH) the chain is Lumenal. Residues 441 to 461 (CILFVWIVYTVIQAGLYGSFL) form a helical membrane-spanning segment. Residues 462 to 464 (PPA) are Cytoplasmic-facing.

Belongs to the PIGV family. As to quaternary structure, part of the GPI mannosyltransferase 2 complex composed of gpi18 and C167.09.

It localises to the endoplasmic reticulum membrane. Its pathway is glycolipid biosynthesis; glycosylphosphatidylinositol-anchor biosynthesis. Mannosyltransferase involved in glycosylphosphatidylinositol-anchor biosynthesis. Responsible for the transfer of the second mannose to the glycosylphosphatidylinositol during GPI precursor assembly. The sequence is that of GPI mannosyltransferase 2 (gpi18) from Schizosaccharomyces pombe (strain 972 / ATCC 24843) (Fission yeast).